Here is a 175-residue protein sequence, read N- to C-terminus: Cuticle protein 16.5, isoform A (175 aa).

19 repeat units span residues 17-20 (AAPA), 25-28 (AAPA), 31-34 (AAPA), 38-41 (AAPA), 44-47 (AAPA), 51-54 (AAPA), 57-60 (AAPA), 64-67 (AAPA), 70-73 (AAPA), 77-80 (AAPA), 83-86 (AAPA), 91-94 (AAPA), 99-102 (AAPA), 106-109 (AAPA), 134-137 (AAPA), 144-147 (AAPA), 151-154 (AAPA), 158-161 (AAPA), and 165-168 (AAPA).

In terms of biological role, component of the cuticle of migratory locust which contains more than 100 different structural proteins. In Locusta migratoria (Migratory locust), this protein is Cuticle protein 16.5, isoform A.